Consider the following 332-residue polypeptide: Probable class II chitinase ARB_00204 (332 aa).

A signal peptide spans 1–18 (MKTPFTILAALTVATTLA). Positions 19 to 331 (DVPDEWDIIE…NPHRKYLDSF (313 aa)) constitute a GH18 domain. The active-site Proton donor is the Glu-118. Asn-245 carries N-linked (GlcNAc...) asparagine glycosylation.

It belongs to the glycosyl hydrolase 18 family. Chitinase class II subfamily.

It is found in the secreted. The enzyme catalyses Random endo-hydrolysis of N-acetyl-beta-D-glucosaminide (1-&gt;4)-beta-linkages in chitin and chitodextrins.. Functionally, degrades chitin and chitotriose. This chain is Probable class II chitinase ARB_00204, found in Arthroderma benhamiae (strain ATCC MYA-4681 / CBS 112371) (Trichophyton mentagrophytes).